The following is a 440-amino-acid chain: Phosphoglucosamine mutase (440 aa).

Ser-97 acts as the Phosphoserine intermediate in catalysis. Mg(2+)-binding residues include Ser-97, Asp-237, Asp-239, and Asp-241. Ser-97 carries the post-translational modification Phosphoserine.

Belongs to the phosphohexose mutase family. Requires Mg(2+) as cofactor. In terms of processing, activated by phosphorylation.

It catalyses the reaction alpha-D-glucosamine 1-phosphate = D-glucosamine 6-phosphate. Catalyzes the conversion of glucosamine-6-phosphate to glucosamine-1-phosphate. This chain is Phosphoglucosamine mutase, found in Nautilia profundicola (strain ATCC BAA-1463 / DSM 18972 / AmH).